The chain runs to 349 residues: MSKIKIALLFGGISGEHIISVRSSAFIFATIDREKYDVCPVYINPNGKFWIPTVSEPIYPDPSGKTEIEFLQEFNKANAIVSPSEPADISQMGFLSAFLGLHGGAGEDGRIQGFLDTLGIPHTGSGVLASSLAMDKYRANILFEAMGIPVAPFLELEKGKTDPRKTLLNLSFSYPVFIKPTLGGSSVNTGMAKTAEEAMTLVDKIFVTDDRVLVQKLVSGTEVSIGVLEKPEGKKRNPFPLVPTEIRPKSEFFDFEAKYTKGASEEITPAPVGDEVTKTLQEYTLRCHEILGCKGYSRTDFIISDGVPYVLETNTLPGMTGTSLIPQQAKALGINMKDVFTWLLEISLS.

In terms of domain architecture, ATP-grasp spans 140-345 (NILFEAMGIP…MKDVFTWLLE (206 aa)). 169–224 (NLSFSYPVFIKPTLGGSSVNTGMAKTAEEAMTLVDKIFVTDDRVLVQKLVSGTEVS) contributes to the ATP binding site. Residues Asp-300, Glu-312, and Asn-314 each contribute to the Mg(2+) site.

It belongs to the D-alanine--D-alanine ligase family. It depends on Mg(2+) as a cofactor. Requires Mn(2+) as cofactor.

The protein resides in the cytoplasm. It carries out the reaction 2 D-alanine + ATP = D-alanyl-D-alanine + ADP + phosphate + H(+). The protein operates within cell wall biogenesis; peptidoglycan biosynthesis. Cell wall formation. This Leptospira biflexa serovar Patoc (strain Patoc 1 / Ames) protein is D-alanine--D-alanine ligase.